The sequence spans 173 residues: Bifunctional protein PyrR (173 aa).

The PRPP-binding motif lies at 93 to 105; that stretch reads VILVDDVLYTGRT.

This sequence belongs to the purine/pyrimidine phosphoribosyltransferase family. PyrR subfamily. As to quaternary structure, homodimer and homohexamer; in equilibrium.

It catalyses the reaction UMP + diphosphate = 5-phospho-alpha-D-ribose 1-diphosphate + uracil. In terms of biological role, regulates transcriptional attenuation of the pyrimidine nucleotide (pyr) operon by binding in a uridine-dependent manner to specific sites on pyr mRNA. This disrupts an antiterminator hairpin in the RNA and favors formation of a downstream transcription terminator, leading to a reduced expression of downstream genes. Functionally, also displays a weak uracil phosphoribosyltransferase activity which is not physiologically significant. The chain is Bifunctional protein PyrR from Streptococcus pneumoniae (strain 70585).